The chain runs to 327 residues: MKKIIKVEAVEKHFGNQVIIPPLSLDIKEGEFLTILGPSGCGKTTLLRMIAGFETPTKGNLLLDDEKINDLPPYKRHMNLVFQHYALFPHMNVEKNICFGMKMQKVPVAEQKERAEEAMRLTQLLEFRNRKPAKLSGGQQQRVAIARAIVNNPRVLLLDEPLGALDFKLRKDLQRELKNLQRNLGITFIYVTHDQEEAMSMSDRIVVMNKGHIEQIGTPKEIYNKPKTLFVATFIGENNIVKNGEGYVAIRPENVKVRSVEEPILKEYHLGHIEDIEFVGNMEKLYVRDEKTSELLMAYQTAEEAAQWSIGDNVYVGWEQEDEVTLN.

The 231-residue stretch at 5–235 folds into the ABC transporter domain; the sequence is IKVEAVEKHF…PKTLFVATFI (231 aa). Position 37–44 (37–44) interacts with ATP; it reads GPSGCGKT.

Belongs to the ABC transporter superfamily. Spermidine/putrescine importer (TC 3.A.1.11.1) family. As to quaternary structure, the complex is composed of two ATP-binding proteins (PotA), two transmembrane proteins (PotB and PotC) and a solute-binding protein (PotD).

Its subcellular location is the cell membrane. The enzyme catalyses ATP + H2O + polyamine-[polyamine-binding protein]Side 1 = ADP + phosphate + polyamineSide 2 + [polyamine-binding protein]Side 1.. Part of the ABC transporter complex PotABCD involved in spermidine/putrescine import. Responsible for energy coupling to the transport system. In Bacillus anthracis, this protein is Spermidine/putrescine import ATP-binding protein PotA.